Reading from the N-terminus, the 277-residue chain is Shikimate dehydrogenase (NADP(+)) (277 aa).

Shikimate contacts are provided by residues 15-17 (SLS) and threonine 62. The active-site Proton acceptor is the lysine 66. The shikimate site is built by asparagine 87 and aspartate 102. NADP(+) is bound by residues 127–131 (GSGGA), 151–156 (NRTVDK), and isoleucine 219. Tyrosine 221 is a shikimate binding site. Glycine 242 is an NADP(+) binding site.

This sequence belongs to the shikimate dehydrogenase family. Homodimer.

The catalysed reaction is shikimate + NADP(+) = 3-dehydroshikimate + NADPH + H(+). It functions in the pathway metabolic intermediate biosynthesis; chorismate biosynthesis; chorismate from D-erythrose 4-phosphate and phosphoenolpyruvate: step 4/7. Functionally, involved in the biosynthesis of the chorismate, which leads to the biosynthesis of aromatic amino acids. Catalyzes the reversible NADPH linked reduction of 3-dehydroshikimate (DHSA) to yield shikimate (SA). The chain is Shikimate dehydrogenase (NADP(+)) from Bacillus cereus (strain B4264).